Consider the following 566-residue polypeptide: Type 2 DNA topoisomerase 6 subunit B (566 aa).

ATP is bound by residues asparagine 48, aspartate 80, 101–102 (TK), 111–118 (GQQGIGIS), and lysine 475.

The protein belongs to the TOP6B family. As to quaternary structure, homodimer. Heterotetramer of two Top6A and two Top6B chains.

The catalysed reaction is ATP-dependent breakage, passage and rejoining of double-stranded DNA.. Functionally, relaxes both positive and negative superturns and exhibits a strong decatenase activity. The sequence is that of Type 2 DNA topoisomerase 6 subunit B from Thermococcus sibiricus (strain DSM 12597 / MM 739).